The following is a 155-amino-acid chain: Endoribonuclease YbeY (155 aa).

His114, His118, and His124 together coordinate Zn(2+).

It belongs to the endoribonuclease YbeY family. Zn(2+) serves as cofactor.

The protein resides in the cytoplasm. Functionally, single strand-specific metallo-endoribonuclease involved in late-stage 70S ribosome quality control and in maturation of the 3' terminus of the 16S rRNA. This is Endoribonuclease YbeY from Cronobacter sakazakii (strain ATCC BAA-894) (Enterobacter sakazakii).